Consider the following 116-residue polypeptide: Nucleoid-associated protein PMM0020 (116 aa).

Over residues 87 to 98 the composition is skewed to basic and acidic residues; that stretch reads ESSTTTMKERMN. Positions 87–116 are disordered; sequence ESSTTTMKERMNDLTGGLNLNLPGLDNNDS. Positions 99–116 are enriched in low complexity; sequence DLTGGLNLNLPGLDNNDS.

Belongs to the YbaB/EbfC family. In terms of assembly, homodimer.

It localises to the cytoplasm. It is found in the nucleoid. Binds to DNA and alters its conformation. May be involved in regulation of gene expression, nucleoid organization and DNA protection. This is Nucleoid-associated protein PMM0020 from Prochlorococcus marinus subsp. pastoris (strain CCMP1986 / NIES-2087 / MED4).